A 74-amino-acid polypeptide reads, in one-letter code: U-scoloptoxin(09)-Sm3a (74 aa).

The first 22 residues, Met-1–Ser-22, serve as a signal peptide directing secretion.

This sequence belongs to the scoloptoxin-09 family. Post-translationally, contains 3 disulfide bonds. In terms of tissue distribution, expressed by the venom gland.

It is found in the secreted. This Scolopendra morsitans (Tanzanian blue ringleg centipede) protein is U-scoloptoxin(09)-Sm3a.